The sequence spans 431 residues: MKRLLFFLICVFFSKTSYSNVDISINKGIDISTPIGISSFEWVEVNENNNYENISKIISCDLQNSGKFSPIEIYKESNKSIEKQIKNNSINLNKLNINTILTGKISLNYNGEYLISYKLIDLVNYPGKILLSGYRTVHLQSFRKVAHEISNEIFKKLTGIQGVFHTRIAYILYNKNNEYKYKLCISDYDGYNQNIIHQSNMPLMSPSWSPDGKKIAYVTFEKGSSEIKIKDIKTGSIKHISSFPYHNGAPAFSPNGENLAFALSKTGSLNLYVMNLKNGYIKQITHGNSNNTEPSWFPDNNSLAYTSDQSGTPQIYKINISNGKFNRLSWLGSKNQNANVSPDGKFIAMVNSEKKSQHIALFDINMDNAKIITETFLDEAPSISPNNVMIIYTSSYGDSSVIELISTNGRFKTSILKINGQIKFPAWSQKI.

The N-terminal stretch at Met1–Ser19 is a signal peptide.

The protein belongs to the TolB family. In terms of assembly, the Tol-Pal system is composed of five core proteins: the inner membrane proteins TolA, TolQ and TolR, the periplasmic protein TolB and the outer membrane protein Pal. They form a network linking the inner and outer membranes and the peptidoglycan layer.

It is found in the periplasm. Part of the Tol-Pal system, which plays a role in outer membrane invagination during cell division and is important for maintaining outer membrane integrity. TolB occupies a key intermediary position in the Tol-Pal system because it communicates directly with both membrane-embedded components, Pal in the outer membrane and TolA in the inner membrane. In Wigglesworthia glossinidia brevipalpis, this protein is Tol-Pal system protein TolB.